We begin with the raw amino-acid sequence, 398 residues long: UDP-N-acetylglucosamine--N-acetylmuramyl-(pentapeptide) pyrophosphoryl-undecaprenol N-acetylglucosamine transferase (398 aa).

UDP-N-acetyl-alpha-D-glucosamine-binding positions include 11–13 (TGG), Asn124, Arg164, Ser192, and Gln318.

Belongs to the glycosyltransferase 28 family. MurG subfamily.

It localises to the cell membrane. It catalyses the reaction di-trans,octa-cis-undecaprenyl diphospho-N-acetyl-alpha-D-muramoyl-L-alanyl-D-glutamyl-meso-2,6-diaminopimeloyl-D-alanyl-D-alanine + UDP-N-acetyl-alpha-D-glucosamine = di-trans,octa-cis-undecaprenyl diphospho-[N-acetyl-alpha-D-glucosaminyl-(1-&gt;4)]-N-acetyl-alpha-D-muramoyl-L-alanyl-D-glutamyl-meso-2,6-diaminopimeloyl-D-alanyl-D-alanine + UDP + H(+). Its pathway is cell wall biogenesis; peptidoglycan biosynthesis. Functionally, cell wall formation. Catalyzes the transfer of a GlcNAc subunit on undecaprenyl-pyrophosphoryl-MurNAc-pentapeptide (lipid intermediate I) to form undecaprenyl-pyrophosphoryl-MurNAc-(pentapeptide)GlcNAc (lipid intermediate II). In Deinococcus radiodurans (strain ATCC 13939 / DSM 20539 / JCM 16871 / CCUG 27074 / LMG 4051 / NBRC 15346 / NCIMB 9279 / VKM B-1422 / R1), this protein is UDP-N-acetylglucosamine--N-acetylmuramyl-(pentapeptide) pyrophosphoryl-undecaprenol N-acetylglucosamine transferase.